We begin with the raw amino-acid sequence, 104 residues long: Protein SMALL AUXIN UP-REGULATED RNA 9 (104 aa).

It belongs to the ARG7 family. In terms of assembly, interacts with and inhibits PP2C-D subfamily of type 2C phosphatases such as PP2C67/PP2C-D1. As to expression, expressed in etiolated hypocotyls, petioles, leaves and flowers.

The protein resides in the cell membrane. In terms of biological role, provide a mechanistic link between auxin and plasma membrane H(+)-ATPases (PM H(+)-ATPases, e.g. AHA1 and AHA2), and triggers PM H(+)-ATPases activity by promoting phosphorylation of their C-terminal autoinhibitory domain as a result of PP2C-D subfamily of type 2C phosphatases inhibition, thus leading to the acidification of the apoplast and the facilitation of solutes and water uptake to drive cell expansion. Triggers plant growth probably by promoting cell elongation. Regulates branch angles and bending. Probably involved in light intensity mediated root development. The sequence is that of Protein SMALL AUXIN UP-REGULATED RNA 9 from Arabidopsis thaliana (Mouse-ear cress).